Consider the following 391-residue polypeptide: Probable acridone synthase 4 (391 aa).

Residue cysteine 164 is part of the active site.

This sequence belongs to the thiolase-like superfamily. Chalcone/stilbene synthases family.

The enzyme catalyses N-methylanthraniloyl-CoA + 3 malonyl-CoA + 3 H(+) = 1,3-dihydroxy-N-methylacridone + 3 CO2 + 4 CoA + H2O. This is Probable acridone synthase 4 (ACS4) from Ruta graveolens (Common rue).